The following is a 382-amino-acid chain: Anhydro-N-acetylmuramic acid kinase (382 aa).

22 to 29 (GTSMDGVD) provides a ligand contact to ATP.

It belongs to the anhydro-N-acetylmuramic acid kinase family.

It catalyses the reaction 1,6-anhydro-N-acetyl-beta-muramate + ATP + H2O = N-acetyl-D-muramate 6-phosphate + ADP + H(+). It participates in amino-sugar metabolism; 1,6-anhydro-N-acetylmuramate degradation. The protein operates within cell wall biogenesis; peptidoglycan recycling. Its function is as follows. Catalyzes the specific phosphorylation of 1,6-anhydro-N-acetylmuramic acid (anhMurNAc) with the simultaneous cleavage of the 1,6-anhydro ring, generating MurNAc-6-P. Is required for the utilization of anhMurNAc either imported from the medium or derived from its own cell wall murein, and thus plays a role in cell wall recycling. The sequence is that of Anhydro-N-acetylmuramic acid kinase from Burkholderia cenocepacia (strain ATCC BAA-245 / DSM 16553 / LMG 16656 / NCTC 13227 / J2315 / CF5610) (Burkholderia cepacia (strain J2315)).